Reading from the N-terminus, the 1332-residue chain is MGDPAPARSLDDIDLSALRDPAGIFELVEVVGNGTYGQVYKGRHVKTGQLAAIKVMDVTEDEEEEIKQEINMLKKYSHHRNIATYYGAFIKKSPPGNDDQLWLVMEFCGAGSVTDLVKNTKGNALKEDCIAYICREILRGLAHLHAHKVIHRDIKGQNVLLTENAEVKLVDFGVSAQLDRTVGRRNTFIGTPYWMAPEVIACDENPDATYDYRSDIWSLGITAIEMAEGAPPLCDMHPMRALFLIPRNPPPRLKSKKWSKKFIDFIDTCLIKTYLSRPPTEQLLKFPFIRDQPTERQVRIQLKDHIDRSRKKRGEKEETEYEYSGSEEEDDSHGEEGEPSSIMNVPGESTLRREFLRLQQENKSNSEALKQQQQLQQQQQRDPEAHIKHLLHQRQRRIEEQKEERRRVEEQQRREREQRKLQEKEQQRRLEDMQALRREEERRQAEREQEYKRKQLEEQRQSERLQRQLQQEHAYLKSLQQQQQQQQLQKQQQQQLLPGDRKPLYHYGRGMNPADKPAWAREVEERTRMNKQQNSPLAKSKPGSTGPEPPIPQASPGPPGPLSQTPPMQRPVEPQEGPHKSLVAHRVPLKPYAAPVPRSQSLQDQPTRNLAAFPASHDPDPAIPAPTATPSARGAVIRQNSDPTSEGPGPSPNPPAWVRPDNEAPPKVPQRTSSIATALNTSGAGGSRPAQAVRARPRSNSAWQIYLQRRAERGTPKPPGPPAQPPGPPNASSNPDLRRSDPGWERSDSVLPASHGHLPQAGSLERNRVGVSSKPDSSPVLSPGNKAKPDDHRSRPGRPADFVLLKERTLDEAPRPPKKAMDYSSSSEEVESSEDDEEEGEGGPAEGSRDTPGGRSDGDTDSVSTMVVHDVEEITGTQPPYGGGTMVVQRTPEEERNLLHADSNGYTNLPDVVQPSHSPTENSKGQSPPSKDGSGDYQSRGLVKAPGKSSFTMFVDLGIYQPGGSGDSIPITALVGGEGTRLDQLQYDVRKGSVVNVNPTNTRAHSETPEIRKYKKRFNSEILCAALWGVNLLVGTENGLMLLDRSGQGKVYGLIGRRRFQQMDVLEGLNLLITISGKRNKLRVYYLSWLRNKILHNDPEVEKKQGWTTVGDMEGCGHYRVVKYERIKFLVIALKSSVEVYAWAPKPYHKFMAFKSFADLPHRPLLVDLTVEEGQRLKVIYGSSAGFHAVDVDSGNSYDIYIPVHIQSQITPHAIIFLPNTDGMEMLLCYEDEGVYVNTYGRIIKDVVLQWGEMPTSVAYICSNQIMGWGEKAIEIRSVETGHLDGVFMHKRAQRLKFLCERNDKVFFASVRSGGSSQVYFMTLNRNCIMNW.

A Protein kinase domain is found at 25–289; sequence FELVEVVGNG…TEQLLKFPFI (265 aa). ATP is bound by residues 31-39 and K54; that span reads VGNGTYGQV. The active-site Proton acceptor is the D153. Disordered regions lie at residues 300 to 347, 363 to 383, and 395 to 887; these read IQLK…NVPG, KSNS…QRDP, and QRRI…GTMV. Residues 317–333 are compositionally biased toward acidic residues; it reads EETEYEYSGSEEEDDSH. 2 positions are modified to phosphoserine: S324 and S326. A compositionally biased stretch (low complexity) spans 371–380; sequence QQQQLQQQQQ. A compositionally biased stretch (basic and acidic residues) spans 396–466; sequence RRIEEQKEER…EEQRQSERLQ (71 aa). The span at 479 to 497 shows a compositional bias: low complexity; the sequence is LQQQQQQQQLQKQQQQQLL. 2 positions are modified to omega-N-methylarginine: R501 and R509. Basic and acidic residues predominate over residues 518-528; that stretch reads AWAREVEERTR. A compositionally biased stretch (pro residues) spans 547–561; the sequence is PEPPIPQASPGPPGP. Polar residues predominate over residues 598-608; sequence RSQSLQDQPTR. S641 is subject to Phosphoserine. Positions 670–682 are enriched in polar residues; the sequence is QRTSSIATALNTS. S701 bears the Phosphoserine mark. Positions 716 to 729 are enriched in pro residues; the sequence is PKPPGPPAQPPGPP. The segment covering 736–748 has biased composition (basic and acidic residues); that stretch reads DLRRSDPGWERSD. Residues S754, S763, S777, S778, and S782 each carry the phosphoserine modification. Residues 804–821 show a composition bias toward basic and acidic residues; sequence LLKERTLDEAPRPPKKAM. Residues 828-841 show a composition bias toward acidic residues; that stretch reads EEVESSEDDEEEGE. Positions 866–1332 are mediates interaction with RAP2A; it reads MVVHDVEEIT…TLNRNCIMNW (467 aa). The residue at position 891 (T891) is a Phosphothreonine. Residues 902-943 form a disordered region; that stretch reads DSNGYTNLPDVVQPSHSPTENSKGQSPPSKDGSGDYQSRGLV. The span at 915–929 shows a compositional bias: polar residues; sequence PSHSPTENSKGQSPP. The CNH domain maps to 1019–1306; the sequence is NSEILCAALW…KFLCERNDKV (288 aa).

The protein belongs to the protein kinase superfamily. STE Ser/Thr protein kinase family. STE20 subfamily. As to quaternary structure, interacts with TANC1. Interacts with RAP2A. Isoform 4 interacts with NCK1. Mg(2+) is required as a cofactor. In terms of processing, autophosphorylated. Expressed in the brain, isoform 2 is more abundant than isoform 1. Isoform 3 is ubiquitously expressed. Isoform 1 is most abundant in the skeletal muscle. Isoform 4 is ubiquitously expressed with relative high levels in brain, skeletal muscle, pancreas and testis.

It is found in the cytoplasm. The protein resides in the postsynaptic density. The protein localises to the cell projection. Its subcellular location is the axon. It localises to the dendrite. It is found in the golgi apparatus. It catalyses the reaction L-seryl-[protein] + ATP = O-phospho-L-seryl-[protein] + ADP + H(+). The enzyme catalyses L-threonyl-[protein] + ATP = O-phospho-L-threonyl-[protein] + ADP + H(+). In terms of biological role, serine/threonine kinase which acts as a negative regulator of Ras-related Rap2-mediated signal transduction to control neuronal structure and AMPA receptor trafficking. Required for normal synaptic density, dendrite complexity, as well as surface AMPA receptor expression in hippocampal neurons. Can activate the JNK and MAPK14/p38 pathways and mediates stimulation of the stress-activated protein kinase MAPK14/p38 MAPK downstream of the Raf/ERK pathway. Phosphorylates TANC1 upon stimulation by RAP2A, MBP and SMAD1. Has an essential function in negative selection of thymocytes, perhaps by coupling NCK1 to activation of JNK1. Activator of the Hippo signaling pathway which plays a pivotal role in organ size control and tumor suppression by restricting proliferation and promoting apoptosis. MAP4Ks act in parallel to and are partially redundant with STK3/MST2 and STK4/MST2 in the phosphorylation and activation of LATS1/2, and establish MAP4Ks as components of the expanded Hippo pathway. Functionally, isoform 4 can activate the JNK pathway. Involved in the regulation of actin cytoskeleton reorganization, cell-matrix adhesion, cell-cell adhesion and cell migration. This chain is Misshapen-like kinase 1, found in Homo sapiens (Human).